Here is a 417-residue protein sequence, read N- to C-terminus: Echinulin prenyltransferase 1 (417 aa).

Dimethylallyl diphosphate-binding residues include R90, K179, Y181, K248, Y250, Y333, Y398, and Y402.

It belongs to the tryptophan dimethylallyltransferase family.

It carries out the reaction cyclo(L-tryptophyl-L-alanyl) + dimethylallyl diphosphate = preechinulin + diphosphate. It functions in the pathway secondary metabolite biosynthesis. It participates in alkaloid biosynthesis. Prenyltransferase; part of the gene cluster that mediates the biosynthesis of echinulin family alkaloid. The pathway begins with the biosynthesis of the cyclic dipeptide cyclo-L-Trp-L-Ala (cyclo-TA) by the NRPS echPS via condensation of L-alanine and L-tryptophan. The prenyltransferase echPT1 then catalyzes the first prenylation step, a reverse prenylation reaction at C2, to yield preechinulin. Preechinulin is the substrate of the cytochrome P450 monooxygenase echP450 that catalyzes the formation of the double bond between C10 and C11 to produce neoechulin A. The unique prenyltransferase echPT2 functions as a competitive enzyme with echP450 for preechinulin metabolization and uses preechinulin for effective regiospecific prenylations. Preechinulin is prenylated by echPT2 at C5 or C7. C7-prenylation leads to accumulation of tardioxopiperazine B without further modification by echPT2. In contrast, the C5-prenylated tardioxopiperazine A can be prenylated again by echPT2, predominantly at C7 to form echinulin or less frequently at C4 to give variecolorin L. EchPT2 also accepts neoechilunin A to produce varlecolorin G (prenylation at C5) or isoechinulin A (prenylation at C7). EchPT2 further converts isoechinulin A into dehydroechinulin. Moreover, a yet unidentified enzyme can also convert neoechilunin A into neoechilunin B by introducing a double bond between positions C14 and C17 and thus provides a further substrate to echPT2 for C5 and C7 prenylation. The protein is Echinulin prenyltransferase 1 of Aspergillus ruber (Eurotium rubrum).